The chain runs to 440 residues: Streptokinase (440 aa).

Positions 1-26 (MKNYLSFGMFALLFALTFGTVKPVQA) are cleaved as a signal peptide. The disordered stretch occupies residues 72 to 94 (PAQGGKTEQGLRPKSKPLATDKG).

In terms of biological role, this protein is not a protease, but it activates plasminogen by complexing with it. As a potential virulence factor, it is thought to prevent the formation of effective fibrin barriers around the site of infection, thereby contributing to the invasiveness of the cells. This Streptococcus pyogenes protein is Streptokinase (ska).